Here is a 208-residue protein sequence, read N- to C-terminus: NADH-quinone oxidoreductase subunit I 2 (208 aa).

4Fe-4S ferredoxin-type domains lie at 79–109 (ILVE…IEGK) and 119–148 (SVFN…QTDI). [4Fe-4S] cluster-binding residues include Cys88, Cys91, Cys94, Cys98, Cys128, Cys131, Cys134, and Cys138.

The protein belongs to the complex I 23 kDa subunit family. As to quaternary structure, NDH-1 is composed of 14 different subunits. Subunits NuoA, H, J, K, L, M, N constitute the membrane sector of the complex. Requires [4Fe-4S] cluster as cofactor.

The protein localises to the cell inner membrane. The enzyme catalyses a quinone + NADH + 5 H(+)(in) = a quinol + NAD(+) + 4 H(+)(out). In terms of biological role, NDH-1 shuttles electrons from NADH, via FMN and iron-sulfur (Fe-S) centers, to quinones in the respiratory chain. The immediate electron acceptor for the enzyme in this species is believed to be ubiquinone. Couples the redox reaction to proton translocation (for every two electrons transferred, four hydrogen ions are translocated across the cytoplasmic membrane), and thus conserves the redox energy in a proton gradient. This is NADH-quinone oxidoreductase subunit I 2 from Aquifex aeolicus (strain VF5).